Consider the following 70-residue polypeptide: Guanine nucleotide-binding protein subunit gamma-1 (70 aa).

Position 67 is a cysteine methyl ester (C67). The S-geranylgeranyl cysteine moiety is linked to residue C67. The propeptide at 68–70 (TVL) is removed in mature form.

Belongs to the G protein gamma family. G proteins are composed of 3 units, alpha, beta and gamma. In terms of tissue distribution, predominantly expressed in the central nervous system.

It localises to the cell membrane. Its function is as follows. Guanine nucleotide-binding proteins (G proteins) are involved as a modulator or transducer in various transmembrane signaling systems. The beta and gamma chains are required for the GTPase activity, for replacement of GDP by GTP, and for G protein-effector interaction. In Drosophila melanogaster (Fruit fly), this protein is Guanine nucleotide-binding protein subunit gamma-1 (Ggamma1).